The following is a 1218-amino-acid chain: ABC transporter NFT1 (1218 aa).

Residues 1–29 are Extracellular-facing; the sequence is MIKNGTCPYWERDDLSECARREYIEFKFP. N-linked (GlcNAc...) asparagine glycosylation is present at asparagine 4. A helical membrane pass occupies residues 30–50; sequence LFILLTGMIYAFCKVFRAFYL. The Cytoplasmic portion of the chain corresponds to 51-103; the sequence is RGKNHTNEAPEFEEQGNGNHEYARFSVLRLKSAWESRSFCNVNNRSTFDKFKK. The helical transmembrane segment at 104–124 threads the bilayer; that stretch reads FIEGAFIVLQLTIHLYILSSM. The Extracellular portion of the chain corresponds to 125-130; the sequence is PMDNKK. A helical transmembrane segment spans residues 131-151; that stretch reads FFHQGFLVQMFLWILLLVVIT. Residues 152–169 lie on the Cytoplasmic side of the membrane; that stretch reads LRLISASQSFRWVLACKR. The helical transmembrane segment at 170–190 threads the bilayer; the sequence is DLWAVSFYSYASLFTLSILPL. The Extracellular portion of the chain corresponds to 191 to 201; sequence RSVFIGKIKDK. The helical transmembrane segment at 202-222 threads the bilayer; the sequence is IMVKYIISETFIDLALLLLLS. Topologically, residues 223 to 302 are cytoplasmic; it reads TSSIEGTRYS…SSKKGRLLPN (80 aa). Residues 303–323 form a helical membrane-spanning segment; that stretch reads IICYFKAVFISQLFLAFVSSF. The 311-residue stretch at 311 to 621 folds into the ABC transmembrane type-1 1 domain; sequence FISQLFLAFV…IASTVSLLIQ (311 aa). At 324-351 the chain is on the extracellular side; the sequence is LNFVPSLLMPRILSYVNDPKSKSWNLVS. A helical membrane pass occupies residues 352-374; sequence LYVSSMLVSKIIATTCRGQGLFL. The Cytoplasmic segment spans residues 375–449; the sequence is GEKGTMQLRT…VMSIDAFKVS (75 aa). The disordered stretch occupies residues 410–434; sequence NASTSFEENPDSSEAEPRKKSSRKD. Residues 424 to 434 are compositionally biased toward basic and acidic residues; sequence AEPRKKSSRKD. A helical membrane pass occupies residues 450-470; sequence EAMNTFYLACEAVFMTVTALM. Topologically, residues 471–481 are extracellular; it reads ILYSLLGWSAF. Residues 482–504 traverse the membrane as a helical segment; it reads AGTFALLAMIPLNFWCATFYGNY. At 505-558 the chain is on the cytoplasmic side; sequence QADQLILTDKRTSGISEALNSIRVIKLLAWENLFYQKIINVRDGEIRLLKKKAT. The helical transmembrane segment at 559-579 threads the bilayer; sequence IFFLNHLIWFFGPTLVSAITF. The Extracellular segment spans residues 580-584; the sequence is SVFIK. A helical transmembrane segment spans residues 585 to 605; the sequence is FQNQTLTPTIAFTALSLFAIL. At 606–953 the chain is on the cytoplasmic side; that stretch reads RTPMDQIAST…KFSAYKWLAD (348 aa). An ABC transporter domain is found at 651–892; that stretch reads FGFEDASMEW…NEFLRESINN (242 aa). 686–693 lines the ATP pocket; sequence GPTGSGKS. Polar residues predominate over residues 892 to 901; it reads NDSKNTTHNQ. A disordered region spans residues 892 to 926; it reads NDSKNTTHNQIDLKRSTTSKKTKNGDPEGGNSQDE. A helical membrane pass occupies residues 954–974; it reads YFGGLGVVFVFTSSSILIHGI. In terms of domain architecture, ABC transmembrane type-1 2 spans 961–1218; the sequence is VFVFTSSSIL…SSVMIIMKAS (258 aa). The Extracellular portion of the chain corresponds to 975–1013; sequence TLSQGFWLRYWLDTGSSGSKSTWLYRIVEGHSNIYFLLT. Residues 1014-1034 traverse the membrane as a helical segment; that stretch reads YIIIGLVSSFLTSGKVWIAII. Residues 1035–1082 lie on the Cytoplasmic side of the membrane; it reads SGTNVTKKIFAKLLSSILYAKLRFHNVTPTGRIMNRFSKDMDIIDQQL. The chain crosses the membrane as a helical span at residues 1083–1105; it reads IPNFEGLSYSVVVCLWIILLIGY. The Extracellular portion of the chain corresponds to 1106-1109; sequence VTPQ. Residues 1110–1132 form a helical membrane-spanning segment; sequence FLLFAIPLCALYYTVCTLYLRAS. Topologically, residues 1133–1197 are cytoplasmic; it reads RELKRIDNIN…NMATEWITYR (65 aa). The helical transmembrane segment at 1198 to 1218 threads the bilayer; that stretch reads VDIIGTLVLFSSSVMIIMKAS.

It belongs to the ABC transporter superfamily. ABCC family. Conjugate transporter (TC 3.A.1.208) subfamily.

The protein resides in the membrane. The sequence is that of ABC transporter NFT1 (NFT1) from Saccharomyces cerevisiae (strain ATCC 204508 / S288c) (Baker's yeast).